A 143-amino-acid polypeptide reads, in one-letter code: MASVLLPQLRTGWHVDQAIVTETKRLVVIRFGRKNDRQCMIMDELLSSIAERVRNFAVIYLCDIDEVSDFDEMYELTDPMTVMFFYHNKHMMCDFGTGNNNKLNFIVDDKQEMIDILETIFRGARKNKGLVVSPYDYNHKRVS.

Alanine 2 carries the post-translational modification N-acetylalanine.

The protein belongs to the DIM1 family. As to quaternary structure, component of the U4/U6-U5 tri-snRNP complex composed of the U4, U6 and U5 snRNAs and at least PRP3, PRP4, PRP6, PRP8, PRP18, PRP31, PRP38, SNU13, SNU23, SNU66, SNU114, SPP381, SMB1, SMD1, SMD2, SMD3, SMX2, SMX3, LSM2, LSM3, LSM4, LSM5, LSM6, LSM7, LSM8, BRR2 and DIB1.

The protein resides in the nucleus. In terms of biological role, essential role in pre-mRNA splicing. Also essential for entry into mitosis (G2/M progression) as well as for chromosome segregation during mitosis. This is Spliceosomal protein DIB1 (DIB1) from Saccharomyces cerevisiae (strain ATCC 204508 / S288c) (Baker's yeast).